Here is a 306-residue protein sequence, read N- to C-terminus: MTNKPAKRPVNGVLLLDKPEGLSSNTALQKARRLFHAEKAGHTGVLDPLATGLLPVCFGEAAKFAQYLLDADKAYTATLKLGEASSTGDAEGEIIAAARADISLAEFQTACQALTGNIRQVPPMFSALKHEGKPLYEYARKGIVIERKPRDITVYSIDIAEFDAPKAVISVRCSKGTYIRTLSEGIAKHIGTFAHLTALRRTETAGFTIAQSHTLEALANLNETERDGLLLPCDVLVSHFPQTVLNDYAVHMLQCGQRPRFEEDLPSDTPVRVYTENGRFVGLAEYQKEICRMKALRLMNTAASSA.

Residue Asp47 is the Nucleophile of the active site.

The protein belongs to the pseudouridine synthase TruB family. Type 1 subfamily.

It catalyses the reaction uridine(55) in tRNA = pseudouridine(55) in tRNA. Responsible for synthesis of pseudouridine from uracil-55 in the psi GC loop of transfer RNAs. The polypeptide is tRNA pseudouridine synthase B (Neisseria gonorrhoeae (strain ATCC 700825 / FA 1090)).